A 177-amino-acid chain; its full sequence is ECF RNA polymerase sigma factor SigL (177 aa).

The sigma-70 factor domain-2 stretch occupies residues L18–R85. An Interaction with polymerase core subunit RpoC motif is present at residues D42–Q45. The tract at residues A119–R167 is sigma-70 factor domain-4. A DNA-binding region (H-T-H motif) is located at residues T141–H160.

This sequence belongs to the sigma-70 factor family. ECF subfamily. In terms of assembly, interacts transiently with the RNA polymerase catalytic core formed by RpoA, RpoB, RpoC and RpoZ (2 alpha, 1 beta, 1 beta' and 1 omega subunit) to form the RNA polymerase holoenzyme that can initiate transcription. Interacts (via sigma-70 factor domain 4) with anti-sigma-L factor RslA.

Functionally, sigma factors are initiation factors that promote the attachment of RNA polymerase to specific initiation sites and are then released. Extracytoplasmic function (ECF) sigma factors are held in an inactive form by an anti-sigma factor until released by regulated intramembrane proteolysis. The chain is ECF RNA polymerase sigma factor SigL (sigL) from Mycobacterium tuberculosis (strain ATCC 35801 / TMC 107 / Erdman).